A 134-amino-acid chain; its full sequence is ATP synthase epsilon chain, chloroplastic (134 aa).

This sequence belongs to the ATPase epsilon chain family. F-type ATPases have 2 components, CF(1) - the catalytic core - and CF(0) - the membrane proton channel. CF(1) has five subunits: alpha(3), beta(3), gamma(1), delta(1), epsilon(1). CF(0) has three main subunits: a, b and c.

The protein localises to the plastid. It localises to the chloroplast thylakoid membrane. Functionally, produces ATP from ADP in the presence of a proton gradient across the membrane. This Nymphaea alba (White water-lily) protein is ATP synthase epsilon chain, chloroplastic.